The sequence spans 255 residues: Ras-like protein family member 12 (255 aa).

GTP-binding positions include 30–37 (GAMGSGKS), 77–81 (DTADQ), and 137–140 (NKVD).

It belongs to the small GTPase superfamily. Ras family.

The catalysed reaction is GTP + H2O = GDP + phosphate + H(+). The protein is Ras-like protein family member 12 (RASL12) of Danio rerio (Zebrafish).